The following is a 120-amino-acid chain: Large ribosomal subunit protein eL8 (120 aa).

Belongs to the eukaryotic ribosomal protein eL8 family. Part of the 50S ribosomal subunit. Probably part of the RNase P complex.

It localises to the cytoplasm. Multifunctional RNA-binding protein that recognizes the K-turn motif in ribosomal RNA, the RNA component of RNase P, box H/ACA, box C/D and box C'/D' sRNAs. The protein is Large ribosomal subunit protein eL8 of Methanosarcina mazei (strain ATCC BAA-159 / DSM 3647 / Goe1 / Go1 / JCM 11833 / OCM 88) (Methanosarcina frisia).